The primary structure comprises 225 residues: Urease accessory protein UreF (225 aa).

It belongs to the UreF family. UreD, UreF and UreG form a complex that acts as a GTP-hydrolysis-dependent molecular chaperone, activating the urease apoprotein by helping to assemble the nickel containing metallocenter of UreC. The UreE protein probably delivers the nickel.

It is found in the cytoplasm. Functionally, required for maturation of urease via the functional incorporation of the urease nickel metallocenter. The polypeptide is Urease accessory protein UreF (Picosynechococcus sp. (strain ATCC 27264 / PCC 7002 / PR-6) (Agmenellum quadruplicatum)).